Reading from the N-terminus, the 300-residue chain is Tyrosine recombinase XerC (300 aa).

The Core-binding (CB) domain maps to Thr-2–Leu-88. The 186-residue stretch at Arg-109–Met-294 folds into the Tyr recombinase domain. Catalysis depends on residues Arg-150, Lys-174, His-246, Arg-249, and His-272. Tyr-281 serves as the catalytic O-(3'-phospho-DNA)-tyrosine intermediate.

Belongs to the 'phage' integrase family. XerC subfamily. Forms a cyclic heterotetrameric complex composed of two molecules of XerC and two molecules of XerD.

The protein resides in the cytoplasm. In terms of biological role, site-specific tyrosine recombinase, which acts by catalyzing the cutting and rejoining of the recombining DNA molecules. The XerC-XerD complex is essential to convert dimers of the bacterial chromosome into monomers to permit their segregation at cell division. It also contributes to the segregational stability of plasmids. This chain is Tyrosine recombinase XerC, found in Listeria monocytogenes serotype 4a (strain HCC23).